The primary structure comprises 178 residues: ATP-dependent protease subunit HslV (178 aa).

The active site involves Thr7. Na(+) contacts are provided by Gly162, Cys165, and Thr168.

Belongs to the peptidase T1B family. HslV subfamily. In terms of assembly, a double ring-shaped homohexamer of HslV is capped on each side by a ring-shaped HslU homohexamer. The assembly of the HslU/HslV complex is dependent on binding of ATP.

It localises to the cytoplasm. It carries out the reaction ATP-dependent cleavage of peptide bonds with broad specificity.. With respect to regulation, allosterically activated by HslU binding. Its function is as follows. Protease subunit of a proteasome-like degradation complex believed to be a general protein degrading machinery. In Paraburkholderia phymatum (strain DSM 17167 / CIP 108236 / LMG 21445 / STM815) (Burkholderia phymatum), this protein is ATP-dependent protease subunit HslV.